A 192-amino-acid polypeptide reads, in one-letter code: Elongation factor P (192 aa).

It belongs to the elongation factor P family.

It localises to the cytoplasm. It functions in the pathway protein biosynthesis; polypeptide chain elongation. In terms of biological role, involved in peptide bond synthesis. Stimulates efficient translation and peptide-bond synthesis on native or reconstituted 70S ribosomes in vitro. Probably functions indirectly by altering the affinity of the ribosome for aminoacyl-tRNA, thus increasing their reactivity as acceptors for peptidyl transferase. In Borrelia recurrentis (strain A1), this protein is Elongation factor P.